The chain runs to 211 residues: Methylthioribulose-1-phosphate dehydratase (211 aa).

Zn(2+) is bound by residues His105 and His107.

It belongs to the aldolase class II family. MtnB subfamily. Requires Zn(2+) as cofactor.

The catalysed reaction is 5-(methylsulfanyl)-D-ribulose 1-phosphate = 5-methylsulfanyl-2,3-dioxopentyl phosphate + H2O. The protein operates within amino-acid biosynthesis; L-methionine biosynthesis via salvage pathway; L-methionine from S-methyl-5-thio-alpha-D-ribose 1-phosphate: step 2/6. In terms of biological role, catalyzes the dehydration of methylthioribulose-1-phosphate (MTRu-1-P) into 2,3-diketo-5-methylthiopentyl-1-phosphate (DK-MTP-1-P). The protein is Methylthioribulose-1-phosphate dehydratase of Acidiphilium cryptum (strain JF-5).